The sequence spans 272 residues: MSGFEQLFPGQLPRLVMFDLDGTLIDSVPDLAAAVDNMLLSLGRKPAGIESVREWVGNGAPVLVRRALAGGIDHSSVDDVEAEHALEVFMEAYGASHELTVVYPGVRDTLKWLHKQGVAMALITNKPERFVAPLLDQMKIGRYFKWIIGGDTLPQKKPDPAALFFVMKMSGIPASQSLFVGDSRSDVLAAKAAGVKCVGLSYGYNHGRPIAEESPTLVIDDLRKLIPGCLDTAAEITLPDAAQSPSGNAIVVVTRKLWMKVIKALARWRWRA.

Asp19 (nucleophile) is an active-site residue. Residues Asp19, Asp21, and Asp182 each contribute to the Mg(2+) site.

It belongs to the HAD-like hydrolase superfamily. CbbY/CbbZ/Gph/YieH family. The cofactor is Mg(2+).

It catalyses the reaction 2-phosphoglycolate + H2O = glycolate + phosphate. The protein operates within organic acid metabolism; glycolate biosynthesis; glycolate from 2-phosphoglycolate: step 1/1. Its function is as follows. Specifically catalyzes the dephosphorylation of 2-phosphoglycolate. Is involved in the dissimilation of the intracellular 2-phosphoglycolate formed during the DNA repair of 3'-phosphoglycolate ends, a major class of DNA lesions induced by oxidative stress. The protein is Phosphoglycolate phosphatase of Pseudomonas fluorescens (strain Pf0-1).